Here is a 399-residue protein sequence, read N- to C-terminus: Tryptophan synthase beta chain (399 aa).

K90 carries the N6-(pyridoxal phosphate)lysine modification.

The protein belongs to the TrpB family. In terms of assembly, tetramer of two alpha and two beta chains. It depends on pyridoxal 5'-phosphate as a cofactor.

The catalysed reaction is (1S,2R)-1-C-(indol-3-yl)glycerol 3-phosphate + L-serine = D-glyceraldehyde 3-phosphate + L-tryptophan + H2O. It participates in amino-acid biosynthesis; L-tryptophan biosynthesis; L-tryptophan from chorismate: step 5/5. Its function is as follows. The beta subunit is responsible for the synthesis of L-tryptophan from indole and L-serine. The sequence is that of Tryptophan synthase beta chain from Phocaeicola vulgatus (strain ATCC 8482 / DSM 1447 / JCM 5826 / CCUG 4940 / NBRC 14291 / NCTC 11154) (Bacteroides vulgatus).